A 186-amino-acid polypeptide reads, in one-letter code: Myosin light chain 1, skeletal muscle isoform (186 aa).

Met1 carries the post-translational modification Blocked amino end (Met). Positions Met1–Ala26 are disordered. Over residues Ala12–Ala26 the composition is skewed to pro residues. EF-hand domains are found at residues Asp42–Asn77 and Ala119–Lys154.

Myosin is a hexamer of 2 heavy chains and 4 light chains.

The chain is Myosin light chain 1, skeletal muscle isoform from Chelon ramada (Thin-lipped grey mullet).